Reading from the N-terminus, the 509-residue chain is Steroid 17-alpha-hydroxylase/17,20 lyase (509 aa).

A substrate-binding site is contributed by Asn-202. Cys-442 provides a ligand contact to heme.

This sequence belongs to the cytochrome P450 family. It depends on heme as a cofactor.

The protein localises to the endoplasmic reticulum membrane. The protein resides in the microsome membrane. It catalyses the reaction a C21-steroid + reduced [NADPH--hemoprotein reductase] + O2 = a 17alpha-hydroxy-C21-steroid + oxidized [NADPH--hemoprotein reductase] + H2O + H(+). The enzyme catalyses progesterone + reduced [NADPH--hemoprotein reductase] + O2 = 17alpha-hydroxyprogesterone + oxidized [NADPH--hemoprotein reductase] + H2O + H(+). It carries out the reaction pregnenolone + reduced [NADPH--hemoprotein reductase] + O2 = 17alpha-hydroxypregnenolone + oxidized [NADPH--hemoprotein reductase] + H2O + H(+). The catalysed reaction is 17alpha-hydroxyprogesterone + reduced [NADPH--hemoprotein reductase] + O2 = androst-4-ene-3,17-dione + acetate + oxidized [NADPH--hemoprotein reductase] + H2O + 2 H(+). It catalyses the reaction 17alpha-hydroxyprogesterone + reduced [NADPH--hemoprotein reductase] + O2 = 16alpha,17alpha-dihydroxyprogesterone + oxidized [NADPH--hemoprotein reductase] + H2O + H(+). The enzyme catalyses 16alpha,17alpha-dihydroxyprogesterone + reduced [NADPH--hemoprotein reductase] + O2 = 6beta,16alpha,17alpha-trihydroxyprogesterone + oxidized [NADPH--hemoprotein reductase] + H2O + H(+). It carries out the reaction 17alpha-hydroxypregnenolone + reduced [NADPH--hemoprotein reductase] + O2 = 3beta-hydroxyandrost-5-en-17-one + acetate + oxidized [NADPH--hemoprotein reductase] + H2O + 2 H(+). The catalysed reaction is 16alpha,17alpha-dihydroxypregnenolone + reduced [NADPH--hemoprotein reductase] + O2 = 3beta,16alpha-dihydroxy-androst-5-en-17-one + acetate + oxidized [NADPH--hemoprotein reductase] + H2O + 2 H(+). It catalyses the reaction 3beta-hydroxyandrost-5-en-17-one + reduced [NADPH--hemoprotein reductase] + O2 = 3beta,16alpha-dihydroxy-androst-5-en-17-one + oxidized [NADPH--hemoprotein reductase] + H2O + H(+). The enzyme catalyses androst-4-ene-3,17-dione + reduced [NADPH--hemoprotein reductase] + O2 = 16alpha-hydroxyandrost-4-ene-3,17-dione + oxidized [NADPH--hemoprotein reductase] + H2O + H(+). It participates in steroid hormone biosynthesis. Its pathway is steroid biosynthesis; glucocorticoid biosynthesis. Its activity is regulated as follows. Regulated predominantly by intracellular cAMP levels. The 17,20-lyase activity is stimulated by cytochrome b5, which acts as an allosteric effector increasing the Vmax of the lyase activity. Its function is as follows. A cytochrome P450 monooxygenase involved in corticoid and androgen biosynthesis. Catalyzes 17-alpha hydroxylation of C21 steroids, which is common for both pathways. A second oxidative step, required only for androgen synthesis, involves an acyl-carbon cleavage. The 17-alpha hydroxy intermediates, as part of adrenal glucocorticoids biosynthesis pathway, are precursors of cortisol. Hydroxylates steroid hormones, pregnenolone and progesterone to form 17-alpha hydroxy metabolites, followed by the cleavage of the C17-C20 bond to form C19 steroids, dehydroepiandrosterone (DHEA) and androstenedione. Has 16-alpha hydroxylase activity. Catalyzes 16-alpha hydroxylation of 17-alpha hydroxy pregnenolone, followed by the cleavage of the C17-C20 bond to form 16-alpha-hydroxy DHEA. Also 16-alpha hydroxylates androgens, relevant for estriol synthesis. Mechanistically, uses molecular oxygen inserting one oxygen atom into a substrate, and reducing the second into a water molecule, with two electrons provided by NADPH via cytochrome P450 reductase (CPR; NADPH-ferrihemoprotein reductase). This is Steroid 17-alpha-hydroxylase/17,20 lyase (CYP17A1) from Sus scrofa (Pig).